We begin with the raw amino-acid sequence, 99 residues long: Aspartyl/glutamyl-tRNA(Asn/Gln) amidotransferase subunit C (99 aa).

It belongs to the GatC family. In terms of assembly, heterotrimer of A, B and C subunits.

It carries out the reaction L-glutamyl-tRNA(Gln) + L-glutamine + ATP + H2O = L-glutaminyl-tRNA(Gln) + L-glutamate + ADP + phosphate + H(+). The catalysed reaction is L-aspartyl-tRNA(Asn) + L-glutamine + ATP + H2O = L-asparaginyl-tRNA(Asn) + L-glutamate + ADP + phosphate + 2 H(+). Its function is as follows. Allows the formation of correctly charged Asn-tRNA(Asn) or Gln-tRNA(Gln) through the transamidation of misacylated Asp-tRNA(Asn) or Glu-tRNA(Gln) in organisms which lack either or both of asparaginyl-tRNA or glutaminyl-tRNA synthetases. The reaction takes place in the presence of glutamine and ATP through an activated phospho-Asp-tRNA(Asn) or phospho-Glu-tRNA(Gln). The protein is Aspartyl/glutamyl-tRNA(Asn/Gln) amidotransferase subunit C of Methylibium petroleiphilum (strain ATCC BAA-1232 / LMG 22953 / PM1).